The chain runs to 132 residues: Small ribosomal subunit protein uS8 (132 aa).

Belongs to the universal ribosomal protein uS8 family. In terms of assembly, part of the 30S ribosomal subunit. Contacts proteins S5 and S12.

Its function is as follows. One of the primary rRNA binding proteins, it binds directly to 16S rRNA central domain where it helps coordinate assembly of the platform of the 30S subunit. This is Small ribosomal subunit protein uS8 from Corynebacterium jeikeium (strain K411).